The primary structure comprises 187 residues: Pumilio homolog 26 (187 aa).

Residues 20–42 form a Pumilio 1; degenerate repeat; the sequence is VATEFLRVSNDVAELHKLSSKLT. Residues 43 to 78 form a Pumilio 2; degenerate repeat; sequence SDPYLFVEFVKTIRGFLSVQTALGLSGEIDTVFLQV. Residues 79 to 116 form a Pumilio 3; degenerate repeat; that stretch reads IKGWFPDLITETFSFLIVVRIINLFNKRANSKVYPDIL. A Pumilio 4; degenerate repeat occupies 117-154; sequence RRIGNNALYLTRNPLRGICLVEKAINVRDPDCTVFIAL. The Pumilio 5 repeat unit spans residues 155 to 187; that stretch reads KLHSHYVELSFEELGSNIVEKLLSVGESGICGV.

It is found in the cytoplasm. Functionally, sequence-specific RNA-binding protein that regulates translation and mRNA stability by binding the 3'-UTR of target mRNAs. This Arabidopsis thaliana (Mouse-ear cress) protein is Pumilio homolog 26 (APUM26).